The sequence spans 91 residues: Small ribosomal subunit protein uS15 (91 aa).

Belongs to the universal ribosomal protein uS15 family. In terms of assembly, part of the 30S ribosomal subunit. Forms a bridge to the 50S subunit in the 70S ribosome, contacting the 23S rRNA.

Its function is as follows. One of the primary rRNA binding proteins, it binds directly to 16S rRNA where it helps nucleate assembly of the platform of the 30S subunit by binding and bridging several RNA helices of the 16S rRNA. Functionally, forms an intersubunit bridge (bridge B4) with the 23S rRNA of the 50S subunit in the ribosome. This Rickettsia prowazekii (strain Madrid E) protein is Small ribosomal subunit protein uS15.